The chain runs to 79 residues: Short neurotoxin 6 (79 aa).

A signal peptide spans 1-21 (MKTLLLTLVMVTIMCLDLGYT). 4 disulfide bridges follow: Cys24-Cys41, Cys34-Cys59, Cys63-Cys71, and Cys72-Cys77.

The protein belongs to the three-finger toxin family. Short-chain subfamily. Type III alpha-neurotoxin sub-subfamily. Expressed by the venom gland.

Its subcellular location is the secreted. Its function is as follows. Binds with high affinity to muscle nicotinic acetylcholine receptor (nAChR) and hinders acetylcholine binding to the receptor, thereby impairing neuromuscular transmission. Competes with the binding of alpha-bungarotoxin on muscle AChR (from Torpedo) with an IC(50) of 0.18 uM. Causes muscle paralysis, spasms and increased respiration. The protein is Short neurotoxin 6 of Pseudonaja textilis (Eastern brown snake).